A 67-amino-acid chain; its full sequence is UPF0337 protein msl9551 (67 aa).

The protein belongs to the UPF0337 (CsbD) family.

The sequence is that of UPF0337 protein msl9551 from Mesorhizobium japonicum (strain LMG 29417 / CECT 9101 / MAFF 303099) (Mesorhizobium loti (strain MAFF 303099)).